A 345-amino-acid chain; its full sequence is Cytoskeleton protein RodZ (345 aa).

Over 1–111 (MNTEASQDQT…LGKKHKKRDG (111 aa)) the chain is Cytoplasmic. One can recognise an HTH cro/C1-type domain in the interval 19–79 (LRQARESLGL…KLVHLPEDEL (61 aa)). The segment at residues 30–49 (QQTVAERLCLKVSTIRDIEE) is a DNA-binding region (H-T-H motif). The helical; Signal-anchor for type II membrane protein transmembrane segment at 112–132 (WLMSFTWLIVLVVLGLTGAWW) threads the bilayer. The Periplasmic portion of the chain corresponds to 133–345 (WQNHQAQQAE…RVARLTVCVE (213 aa)). A disordered region spans residues 151–259 (SAQLSQNGGQ…PLPTADAGVS (109 aa)). Positions 188-225 (PLTNHSGSAITNSATTSSVPKTTSTEPVDTANTNTTMH) are enriched in polar residues. Residues 229–241 (AASAAVSPSQVPQ) are compositionally biased toward low complexity.

The protein belongs to the RodZ family.

It is found in the cell inner membrane. Cytoskeletal protein that is involved in cell-shape control through regulation of the length of the long axis. The protein is Cytoskeleton protein RodZ of Yersinia pestis bv. Antiqua (strain Antiqua).